We begin with the raw amino-acid sequence, 329 residues long: ADP-L-glycero-D-manno-heptose-6-epimerase (329 aa).

Residues 10 to 11, 31 to 32, lysine 38, lysine 53, 74 to 78, and asparagine 91 each bind NADP(+); these read FI, DD, and QGACS. Residue tyrosine 138 is the Proton acceptor of the active site. Lysine 142 contributes to the NADP(+) binding site. Asparagine 167 serves as a coordination point for substrate. The NADP(+) site is built by valine 168 and lysine 176. The active-site Proton acceptor is lysine 176. Substrate is bound by residues arginine 178, histidine 185, 199–202, arginine 212, and tyrosine 291; that span reads FAGW.

It belongs to the NAD(P)-dependent epimerase/dehydratase family. HldD subfamily. Homopentamer. Requires NADP(+) as cofactor.

It carries out the reaction ADP-D-glycero-beta-D-manno-heptose = ADP-L-glycero-beta-D-manno-heptose. It participates in nucleotide-sugar biosynthesis; ADP-L-glycero-beta-D-manno-heptose biosynthesis; ADP-L-glycero-beta-D-manno-heptose from D-glycero-beta-D-manno-heptose 7-phosphate: step 4/4. Its pathway is bacterial outer membrane biogenesis; LPS core biosynthesis. Functionally, catalyzes the interconversion between ADP-D-glycero-beta-D-manno-heptose and ADP-L-glycero-beta-D-manno-heptose via an epimerization at carbon 6 of the heptose. The chain is ADP-L-glycero-D-manno-heptose-6-epimerase from Bordetella parapertussis (strain 12822 / ATCC BAA-587 / NCTC 13253).